We begin with the raw amino-acid sequence, 248 residues long: UPF0736 protein BC_1176 (248 aa).

Belongs to the UPF0736 family.

The polypeptide is UPF0736 protein BC_1176 (Bacillus cereus (strain ATCC 14579 / DSM 31 / CCUG 7414 / JCM 2152 / NBRC 15305 / NCIMB 9373 / NCTC 2599 / NRRL B-3711)).